Here is a 58-residue protein sequence, read N- to C-terminus: Cholecystokinins (58 aa).

Tyr52 is modified (sulfotyrosine). Phe58 bears the Phenylalanine amide mark.

Belongs to the gastrin/cholecystokinin family. In terms of assembly, binds to CCK-A receptors in the pancreas and CCK-B receptors in the brain. cholecystokinin 8 binds CCK-A receptors more potently than cholecystokinin 58, cholecystokinin 8 and cholecystokinin 58 bind CCK-B receptors with equal affinity. Post-translationally, the precursor is cleaved by proteases to produce a number of active cholecystokinins. In terms of processing, cholecystokinin 58 occurs in both sulfated (CCK58(s)) and nonsulfated (CCK58(ns)) forms, which differ in their receptor-binding activities. CCK58(s) binds to the CCK-A receptor with high affinity, CCK58(ns) binds poorly to the CCK-A receptor. CCK58(s) and CCK58(ns) both bind the CCK-B receptor. The precursor is cleaved by ACE, which removes the Gly-Arg-Arg peptide at the C-terminus, leading to mature hormone.

It is found in the secreted. Its function is as follows. This peptide hormone induces gall bladder contraction and the release of pancreatic enzymes in the gut. Its function in the brain is not clear. Binding to CCK-A receptors stimulates amylase release from the pancreas, binding to CCK-B receptors stimulates gastric acid secretion. cholecystokinin 58 and cholecystokinin 8, but not cholecystokinin 58 desnonopeptide, stimulate amylase release from the pancreas. cholecystokinin 58, but not cholecystokinin 8, increases bile-pancreatic volume. The chain is Cholecystokinins from Canis lupus familiaris (Dog).